Consider the following 239-residue polypeptide: Large ribosomal subunit protein uL1 (239 aa).

It belongs to the universal ribosomal protein uL1 family. In terms of assembly, part of the 50S ribosomal subunit.

Functionally, binds directly to 23S rRNA. The L1 stalk is quite mobile in the ribosome, and is involved in E site tRNA release. Protein L1 is also a translational repressor protein, it controls the translation of the L11 operon by binding to its mRNA. The polypeptide is Large ribosomal subunit protein uL1 (Rickettsia bellii (strain OSU 85-389)).